A 490-amino-acid polypeptide reads, in one-letter code: Cytochrome P450 2C20 (490 aa).

Residue Cys-435 participates in heme binding.

It belongs to the cytochrome P450 family. The cofactor is heme.

Its subcellular location is the endoplasmic reticulum membrane. It localises to the microsome membrane. It carries out the reaction an organic molecule + reduced [NADPH--hemoprotein reductase] + O2 = an alcohol + oxidized [NADPH--hemoprotein reductase] + H2O + H(+). In terms of biological role, cytochromes P450 are a group of heme-thiolate monooxygenases. In liver microsomes, this enzyme is involved in an NADPH-dependent electron transport pathway. It oxidizes a variety of structurally unrelated compounds, including steroids, fatty acids, and xenobiotics. The sequence is that of Cytochrome P450 2C20 (CYP2C20) from Macaca fascicularis (Crab-eating macaque).